The sequence spans 296 residues: Bifunctional protein FolD 1/3 (296 aa).

NADP(+)-binding positions include 166–168, Ser191, and Ile232; that span reads GRS.

It belongs to the tetrahydrofolate dehydrogenase/cyclohydrolase family. Homodimer.

It carries out the reaction (6R)-5,10-methylene-5,6,7,8-tetrahydrofolate + NADP(+) = (6R)-5,10-methenyltetrahydrofolate + NADPH. The catalysed reaction is (6R)-5,10-methenyltetrahydrofolate + H2O = (6R)-10-formyltetrahydrofolate + H(+). Its pathway is one-carbon metabolism; tetrahydrofolate interconversion. In terms of biological role, catalyzes the oxidation of 5,10-methylenetetrahydrofolate to 5,10-methenyltetrahydrofolate and then the hydrolysis of 5,10-methenyltetrahydrofolate to 10-formyltetrahydrofolate. This Ruegeria pomeroyi (strain ATCC 700808 / DSM 15171 / DSS-3) (Silicibacter pomeroyi) protein is Bifunctional protein FolD 1/3.